The primary structure comprises 418 residues: F-box/LRR-repeat protein 14 (418 aa).

Residues 2-48 (ETHISCLFPELLAMIFGYLDVRDKGRAAQVCTAWRDAAYHKSVWRGV) form the F-box domain. Residues 2 to 48 (ETHISCLFPELLAMIFGYLDVRDKGRAAQVCTAWRDAAYHKSVWRGV) form a required for down-regulation of SNAI1 region. LRR repeat units lie at residues 144 to 163 (GLEV…GLLL), 170 to 191 (RLKS…GHLA), 203 to 225 (GLEQ…HISR), 229 to 250 (GLRL…LHLS), and 254 to 275 (SLRS…MHLA).

As to quaternary structure, part of a SCF (SKP1-cullin-F-box) ubiquitin-protein ligase complex. Interacts with SKP1 and CUL1. Interacts with SNAI1; the interaction requires the phosphorylation of the two serine residues in the substrate destruction motif D-S-G-X(2,3,4)-S.

It is found in the cytoplasm. Its function is as follows. Substrate-recognition component of some SCF (SKP1-CUL1-F-box protein)-type E3 ubiquitin-protein ligase complexes. The SCF(FBXL14) complex acts by mediating ubiquitination and subsequent degradation of SNAI1. The polypeptide is F-box/LRR-repeat protein 14 (FBXL14) (Homo sapiens (Human)).